Reading from the N-terminus, the 235-residue chain is 7-cyano-7-deazaguanine synthase (235 aa).

Residue 11–21 (FSGGQDSTTCV) coordinates ATP. Cys-199, Cys-214, Cys-217, and Cys-220 together coordinate Zn(2+).

Belongs to the QueC family. Zn(2+) is required as a cofactor.

It catalyses the reaction 7-carboxy-7-deazaguanine + NH4(+) + ATP = 7-cyano-7-deazaguanine + ADP + phosphate + H2O + H(+). Its pathway is purine metabolism; 7-cyano-7-deazaguanine biosynthesis. Its function is as follows. Catalyzes the ATP-dependent conversion of 7-carboxy-7-deazaguanine (CDG) to 7-cyano-7-deazaguanine (preQ(0)). In Janthinobacterium sp. (strain Marseille) (Minibacterium massiliensis), this protein is 7-cyano-7-deazaguanine synthase.